Consider the following 173-residue polypeptide: MSVVIINTGCSNLSSIKYAICRLGYNPKISTSVRDILSANKILLPGVGSAYSAIRVLSESNLLNIIKKCQQPFLGICLGMQLLSAFSSEAQGLDLLSIINSPVYRLNSGSLPLPHNGWNNVEICRNNVLFEDIENHSKFYFLHSYSVDITKYTIAKTLYNTYFSAAIQKNNFW.

The region spanning 2–173 is the Glutamine amidotransferase type-1 domain; the sequence is SVVIINTGCS…SAAIQKNNFW (172 aa). Cysteine 77 acts as the Nucleophile in catalysis.

Heterodimer of HisH and HisF.

The protein localises to the cytoplasm. It carries out the reaction 5-[(5-phospho-1-deoxy-D-ribulos-1-ylimino)methylamino]-1-(5-phospho-beta-D-ribosyl)imidazole-4-carboxamide + L-glutamine = D-erythro-1-(imidazol-4-yl)glycerol 3-phosphate + 5-amino-1-(5-phospho-beta-D-ribosyl)imidazole-4-carboxamide + L-glutamate + H(+). The enzyme catalyses L-glutamine + H2O = L-glutamate + NH4(+). It participates in amino-acid biosynthesis; L-histidine biosynthesis; L-histidine from 5-phospho-alpha-D-ribose 1-diphosphate: step 5/9. IGPS catalyzes the conversion of PRFAR and glutamine to IGP, AICAR and glutamate. The HisH subunit catalyzes the hydrolysis of glutamine to glutamate and ammonia as part of the synthesis of IGP and AICAR. The resulting ammonia molecule is channeled to the active site of HisF. This is Imidazole glycerol phosphate synthase subunit HisH (hisH) from Buchnera aphidicola subsp. Melaphis rhois.